The primary structure comprises 328 residues: Carbonic anhydrase, chloroplastic (328 aa).

The segment covering 1-15 has biased composition (low complexity); it reads MSTSSINGFSLSSLS. Residues 1–26 form a disordered region; it reads MSTSSINGFSLSSLSPAKTSTKRTTL. A chloroplast-targeting transit peptide spans 1–70; that stretch reads MSTSSINGFS…IITPVLREEM (70 aa).

This sequence belongs to the beta-class carbonic anhydrase family. As to quaternary structure, homohexamer.

It is found in the plastid. The protein resides in the chloroplast stroma. The catalysed reaction is hydrogencarbonate + H(+) = CO2 + H2O. In terms of biological role, reversible hydration of carbon dioxide. This Pisum sativum (Garden pea) protein is Carbonic anhydrase, chloroplastic.